The following is a 204-amino-acid chain: Imidazoleglycerol-phosphate dehydratase (204 aa).

Belongs to the imidazoleglycerol-phosphate dehydratase family.

It localises to the cytoplasm. The enzyme catalyses D-erythro-1-(imidazol-4-yl)glycerol 3-phosphate = 3-(imidazol-4-yl)-2-oxopropyl phosphate + H2O. Its pathway is amino-acid biosynthesis; L-histidine biosynthesis; L-histidine from 5-phospho-alpha-D-ribose 1-diphosphate: step 6/9. The polypeptide is Imidazoleglycerol-phosphate dehydratase (Rhodococcus opacus (strain B4)).